Reading from the N-terminus, the 468-residue chain is 6-phosphogluconate dehydrogenase, decarboxylating (468 aa).

NADP(+)-binding positions include 10-15 (GMAVMG), 33-35 (NRS), 74-76 (IKS), and N102. Substrate-binding positions include N102 and 128-130 (SGG). K182 (proton acceptor) is an active-site residue. 185 to 186 (HN) provides a ligand contact to substrate. The active-site Proton donor is the E189. Residues Y190, K259, R286, R445, and H451 each coordinate substrate.

Belongs to the 6-phosphogluconate dehydrogenase family. Homodimer.

It catalyses the reaction 6-phospho-D-gluconate + NADP(+) = D-ribulose 5-phosphate + CO2 + NADPH. Its pathway is carbohydrate degradation; pentose phosphate pathway; D-ribulose 5-phosphate from D-glucose 6-phosphate (oxidative stage): step 3/3. In terms of biological role, catalyzes the oxidative decarboxylation of 6-phosphogluconate to ribulose 5-phosphate and CO(2), with concomitant reduction of NADP to NADPH. The sequence is that of 6-phosphogluconate dehydrogenase, decarboxylating (gnd) from Buchnera aphidicola subsp. Baizongia pistaciae (strain Bp).